The chain runs to 419 residues: tRNA modification GTPase MnmE (419 aa).

(6S)-5-formyl-5,6,7,8-tetrahydrofolate contacts are provided by Arg-20, Glu-76, and Arg-115. Residues Gly-211–Arg-348 enclose the TrmE-type G domain. Position 221 (Asn-221) interacts with K(+). Residues Asn-221–Thr-226, Ser-240–Thr-246, and Asp-265–Gly-268 contribute to the GTP site. Mg(2+) is bound at residue Ser-225. Positions 240, 242, and 245 each coordinate K(+). Thr-246 contributes to the Mg(2+) binding site. A (6S)-5-formyl-5,6,7,8-tetrahydrofolate-binding site is contributed by Lys-419.

The protein belongs to the TRAFAC class TrmE-Era-EngA-EngB-Septin-like GTPase superfamily. TrmE GTPase family. As to quaternary structure, homodimer. Heterotetramer of two MnmE and two MnmG subunits. Requires K(+) as cofactor.

Its subcellular location is the cytoplasm. Its function is as follows. Exhibits a very high intrinsic GTPase hydrolysis rate. Involved in the addition of a carboxymethylaminomethyl (cmnm) group at the wobble position (U34) of certain tRNAs, forming tRNA-cmnm(5)s(2)U34. The protein is tRNA modification GTPase MnmE of Paracoccus denitrificans (strain Pd 1222).